A 233-amino-acid chain; its full sequence is Protein FAM204A (233 aa).

A disordered region spans residues 1-126 (MWSGLLPPGL…HSEPSSNETQ (126 aa)). Residues 13–24 (SDAESNSEDEAT) show a composition bias toward acidic residues. Residues 39-58 (ESIRKTEIIDFSTDEPKTET) show a composition bias toward basic and acidic residues. Residues 97-109 (FRGKRRKRSRKDK) are compositionally biased toward basic residues. Positions 144 to 164 (VKRKKVEKSGLEKRIDQAVEE) form a coiled coil.

This Homo sapiens (Human) protein is Protein FAM204A (FAM204A).